We begin with the raw amino-acid sequence, 131 residues long: Profilin-1 (131 aa).

It belongs to the profilin family. As to quaternary structure, occurs in many kinds of cells as a complex with monomeric actin in a 1:1 ratio.

Its subcellular location is the cytoplasm. It is found in the cytoskeleton. Binds to actin and affects the structure of the cytoskeleton. At high concentrations, profilin prevents the polymerization of actin, whereas it enhances it at low concentrations. By binding to PIP2, it inhibits the formation of IP3 and DG. The sequence is that of Profilin-1 (PRO1) from Triticum aestivum (Wheat).